We begin with the raw amino-acid sequence, 236 residues long: Apoptosis regulator Bcl-2 (236 aa).

Positions 10–30 match the BH4 motif; sequence DNREIVMKYIHYKLSQRGYEW. Thr-69 carries the phosphothreonine; by MAPK8 modification. Phosphoserine; by MAPK8 and PKC is present on Ser-70. Ser-84 bears the Phosphoserine; by MAPK8 mark. Residues 90–104 carry the BH3 motif; it reads VHLTLRRAGDDFSRR. The short motif at 133–152 is the BH1 element; it reads ELFRDGVNWGRIVAFFEFGG. The short motif at 184 to 199 is the BH2 element; sequence TWIQDNGGWDAFVELY. Residues 209–230 traverse the membrane as a helical segment; it reads FSWLSLKTLLSLALVGACITLG.

The protein belongs to the Bcl-2 family. As to quaternary structure, forms homodimers, and heterodimers with BAX, BAD, BAK and Bcl-X(L). Heterodimerization with BAX requires intact BH1 and BH2 motifs, and is necessary for anti-apoptotic activity. Component of the complex, at least composed of LRPPRC, BECN1 and BCL2; the interactions prevent BECN1 from forming an autophagy-inducing complex with PIK3C3. Interacts with EI24. Also interacts with APAF1, BBC3, BCL2L1, BNIPL, MRPL41 and TP53BP2. Binding to FKBP8 seems to target BCL2 to the mitochondria and probably interferes with the binding of BCL2 to its targets. Interacts with BAG1 in an ATP-dependent manner. Interacts with RAF1 (the 'Ser-338' and 'Ser-339' phosphorylated form). Interacts (via the BH4 domain) with EGLN3; the interaction prevents the formation of the BAX-BCL2 complex and inhibits the anti-apoptotic activity of BCL2. Interacts with G0S2; this interaction also prevents the formation of the anti-apoptotic BAX-BCL2 complex. Interacts with RTL10/BOP. Interacts with the SCF(FBXO10) complex. Interacts (via the loop between motifs BH4 and BH3) with NLRP1 (via LRR repeats), but not with NLRP2, NLRP3, NLRP4, PYCARD, nor MEFV. Interacts with GIMAP3/IAN4, GIMAP4/IAN1 and GIMAP5/IAN5. Interacts with BCAP31. Interacts with IRF3; the interaction is inhibited by Sendai virus infection. Interacts with BECN1; thereby inhibiting autophagy in non-starvation conditions. Interacts with AMBRA1; thereby inhibiting autophagy. Phosphorylation/dephosphorylation on Ser-70 regulates anti-apoptotic activity. Growth factor-stimulated phosphorylation on Ser-70 by PKC is required for the anti-apoptosis activity and occurs during the G2/M phase of the cell cycle. In the absence of growth factors, BCL2 appears to be phosphorylated by other protein kinases such as ERKs and stress-activated kinases. Phosphorylated by MAPK8/JNK1 at Thr-69, Ser-70 and Ser-84, which stimulates starvation-induced autophagy. Dephosphorylated by protein phosphatase 2A (PP2A). In terms of processing, proteolytically cleaved by caspases during apoptosis. The cleaved protein, lacking the BH4 motif, has pro-apoptotic activity, causes the release of cytochrome c into the cytosol promoting further caspase activity. Post-translationally, monoubiquitinated by PRKN, leading to an increase in its stability. Ubiquitinated by SCF(FBXO10), leading to its degradation by the proteasome.

The protein localises to the mitochondrion outer membrane. It localises to the nucleus membrane. Its subcellular location is the endoplasmic reticulum membrane. The protein resides in the cytoplasm. In terms of biological role, suppresses apoptosis in a variety of cell systems including factor-dependent lymphohematopoietic and neural cells. Regulates cell death by controlling the mitochondrial membrane permeability. Appears to function in a feedback loop system with caspases. Inhibits caspase activity either by preventing the release of cytochrome c from the mitochondria and/or by binding to the apoptosis-activating factor (APAF-1). Also acts as an inhibitor of autophagy: interacts with BECN1 and AMBRA1 during non-starvation conditions and inhibits their autophagy function. May attenuate inflammation by impairing NLRP1-inflammasome activation, hence CASP1 activation and IL1B release. The protein is Apoptosis regulator Bcl-2 (BCL2) of Cricetulus griseus (Chinese hamster).